Here is a 342-residue protein sequence, read N- to C-terminus: Farnesyl pyrophosphate synthase (342 aa).

Residues Lys-47, Arg-50, and Gln-86 each coordinate isopentenyl diphosphate. Residues Asp-93 and Asp-97 each coordinate Mg(2+). Arg-102 serves as a coordination point for dimethylallyl diphosphate. Residue Arg-103 coordinates isopentenyl diphosphate. 5 residues coordinate dimethylallyl diphosphate: Lys-190, Thr-191, Gln-229, Lys-246, and Lys-255.

It belongs to the FPP/GGPP synthase family. In terms of assembly, homodimer. Mg(2+) serves as cofactor. As to expression, mostly expressed in roots and seeds, and to a lower extent, in leaves and stems.

Its subcellular location is the cytoplasm. The catalysed reaction is isopentenyl diphosphate + dimethylallyl diphosphate = (2E)-geranyl diphosphate + diphosphate. It catalyses the reaction isopentenyl diphosphate + (2E)-geranyl diphosphate = (2E,6E)-farnesyl diphosphate + diphosphate. It participates in isoprenoid biosynthesis; farnesyl diphosphate biosynthesis; farnesyl diphosphate from geranyl diphosphate and isopentenyl diphosphate: step 1/1. Its pathway is isoprenoid biosynthesis; geranyl diphosphate biosynthesis; geranyl diphosphate from dimethylallyl diphosphate and isopentenyl diphosphate: step 1/1. Stimulated by methyl jasmonate (MeJA). Functionally, catalyzes the sequential condensation of isopentenyl pyrophosphate with the allylic pyrophosphates, dimethylallyl pyrophosphate, and then with the resultant geranylpyrophosphate to the ultimate product farnesyl pyrophosphate. Component of the triterpene saponins (e.g. ginsenosides or panaxosides) and phytosterols biosynthetic pathways. Promotes the accumulation of ginsenosides. The protein is Farnesyl pyrophosphate synthase of Panax ginseng (Korean ginseng).